Reading from the N-terminus, the 415-residue chain is Multidrug resistance protein MdtA (415 aa).

An N-terminal signal peptide occupies residues 1–21; sequence MKGSYKSRWVIVIVVVIAAIA. Residues 31–47 show a composition bias toward polar residues; that stretch reads DSQSAAPGATKQAQQSP. Disordered stretches follow at residues 31–60 and 392–415; these read DSQS…GPLA and EAQS…GARS. Basic and acidic residues predominate over residues 399–415; it reads PEEKATSREYAKKGARS.

This sequence belongs to the membrane fusion protein (MFP) (TC 8.A.1) family. In terms of assembly, part of a tripartite efflux system composed of MdtA, MdtB and MdtC.

Its subcellular location is the cell inner membrane. The MdtABC tripartite complex confers resistance against novobiocin and deoxycholate. This is Multidrug resistance protein MdtA from Escherichia coli O157:H7.